Consider the following 61-residue polypeptide: Conotoxin TeAr154 (61 aa).

An N-terminal signal peptide occupies residues 1-19 (MHCLPVFVILLLLTASGLS). The propeptide occupies 20–47 (VDARPKTEDDVPLSSFRDNTKSTLQRLL). Glu-57 bears the 4-carboxyglutamate mark.

In terms of processing, contains 2 disulfide bonds that can be either 'C1-C3, C2-C4' or 'C1-C4, C2-C3', since these disulfide connectivities have been observed for conotoxins with cysteine framework V (for examples, see AC P0DQQ7 and AC P81755). Contains 2 disulfide bonds. In terms of tissue distribution, expressed by the venom duct.

The protein resides in the secreted. The sequence is that of Conotoxin TeAr154 from Conus textile (Cloth-of-gold cone).